The sequence spans 421 residues: UDP-glucuronic acid decarboxylase 1 (421 aa).

Residues 1–19 (MVRTRIQRLLTGINRRMMK) are Cytoplasmic-facing. A helical transmembrane segment spans residues 20 to 40 (LLIALALIAYVASVWGNFVNM). Over 41 to 421 (SKSIQENGEQ…RVKKGRTRHN (381 aa)) the chain is Lumenal. NAD(+)-binding residues include Gly99, Phe100, Val101, Asp120, Asn121, Phe123, Thr124, Gly125, Asp145, and Val146. Positions 150 and 151 each coordinate UDP-alpha-D-glucuronate. NAD(+) is bound by residues Leu160 and Ser162. Lys178 contributes to the UDP-alpha-D-glucuronate binding site. An NAD(+)-binding site is contributed by Thr179. Residues Asn186, Gly189, Lys192, and Arg193 each coordinate UDP-alpha-D-glucuronate. Residues Ala201, Tyr232, and Lys236 each coordinate NAD(+). Tyr232 acts as the Proton acceptor in catalysis. UDP-alpha-D-glucuronate contacts are provided by Tyr246, Gln249, and Glu250. Residues Thr262, His268, and Arg273 each coordinate NAD(+). N-linked (GlcNAc...) asparagine glycosylation is found at Asn317 and Asn386. Residues 400–421 (ANNQYIPKPKPARVKKGRTRHN) form a disordered region. The span at 409 to 421 (KPARVKKGRTRHN) shows a compositional bias: basic residues.

Belongs to the NAD(P)-dependent epimerase/dehydratase family. UDP-glucuronic acid decarboxylase subfamily. As to quaternary structure, homodimer and homotetramer. It depends on NAD(+) as a cofactor.

The protein localises to the golgi apparatus. It is found in the golgi stack membrane. It carries out the reaction UDP-alpha-D-glucuronate + H(+) = UDP-alpha-D-xylose + CO2. The protein operates within nucleotide-sugar biosynthesis; UDP-alpha-D-xylose biosynthesis; UDP-alpha-D-xylose from UDP-alpha-D-glucuronate: step 1/1. Functionally, catalyzes the NAD-dependent decarboxylation of UDP-glucuronic acid to UDP-xylose. Necessary for the biosynthesis of the core tetrasaccharide in glycosaminoglycan biosynthesis. The polypeptide is UDP-glucuronic acid decarboxylase 1 (uxs1) (Xenopus tropicalis (Western clawed frog)).